We begin with the raw amino-acid sequence, 381 residues long: Transcriptional regulatory protein FlgR (381 aa).

One can recognise a Response regulatory domain in the interval Lys2–Lys113. At Asp51 the chain carries 4-aspartylphosphate. Residues Phe136–Ile365 enclose the Sigma-54 factor interaction domain. Residues Gly164–Glu171 and Ala227–Glu236 each bind ATP.

Phosphorylated by FlgS.

Its function is as follows. Member of the two-component regulatory system FlgR/FlgS that induces the transcriptional induction of the genes needed in motility and flagellar biogenesis. Upon phosphorylation by FlgS, functions as a transcriptional regulator and activates transcription of RpoN-dependent flagellar genes. This Helicobacter pylori (strain ATCC 700392 / 26695) (Campylobacter pylori) protein is Transcriptional regulatory protein FlgR (flgR).